The sequence spans 764 residues: Mitogen-activated protein kinase kinase kinase 1b (764 aa).

Disordered regions lie at residues 1–81 (MVEE…IQQQ), 120–260 (KSIA…TATR), 325–348 (PNLAEEAESSAKPESSAIPDSSAM), and 360–392 (VPELSAKPESNAKPESEPEQDSSVEARTEHYGS). The span at 14-30 (GSWGSGEDGGSSHGGKG) shows a compositional bias: gly residues. Composition is skewed to low complexity over residues 60–76 (VHSTSSSGSRRNPLSKS) and 125–135 (SQPLSSPSLSQ). Positions 136–145 (EHGEASHSND) are enriched in basic and acidic residues. Residues 184–201 (YVNSQPQNHYGRKNSPSQ) show a composition bias toward polar residues. The Protein kinase domain occupies 431–684 (WFKGDFIGSG…CDMLLTHPFI (254 aa)). ATP is bound by residues 437–445 (IGSGTFGSV) and lysine 459. Aspartate 554 serves as the catalytic Proton acceptor. The interval 706 to 764 (EERSIDVSESPSIATSSQSGSSPSVAGDAVSPASVAVRPRSMRTLRSEFSMSSPESIAS) is disordered. The segment covering 715–729 (SPSIATSSQSGSSPS) has biased composition (low complexity). A compositionally biased stretch (polar residues) spans 752-764 (SEFSMSSPESIAS).

It belongs to the protein kinase superfamily. STE Ser/Thr protein kinase family. MAP kinase kinase kinase subfamily.

It is found in the cell membrane. The catalysed reaction is L-seryl-[protein] + ATP = O-phospho-L-seryl-[protein] + ADP + H(+). The enzyme catalyses L-threonyl-[protein] + ATP = O-phospho-L-threonyl-[protein] + ADP + H(+). In terms of biological role, the CERK1, MEKK1a/b, MKK1a/b/c and MPK4a/b proteins are involved in pathogen defense. The pathway induces rapid growth inhibition, cell wall depositions and accumulation of defense-related transcripts. This protein is required for responses to chitin and acts redundantly with MEKK1a. The sequence is that of Mitogen-activated protein kinase kinase kinase 1b (MEKK1b) from Physcomitrium patens (Spreading-leaved earth moss).